A 311-amino-acid chain; its full sequence is Probable cobalamin biosynthesis protein CobD (311 aa).

Transmembrane regions (helical) follow at residues 53–73 (FIFGTLTTISVLFIVFGAIYG), 76–96 (ILINNIQNIYIKYIVYSFLIS), 157–177 (DSIIAPLFYAIFFGLEGAFIY), and 288–308 (FSIDVVIFSFIVLYSIYYVIF).

This sequence belongs to the CobD/CbiB family.

It localises to the cell membrane. Its pathway is cofactor biosynthesis; adenosylcobalamin biosynthesis. Functionally, converts cobyric acid to cobinamide by the addition of aminopropanol on the F carboxylic group. This chain is Probable cobalamin biosynthesis protein CobD, found in Methanococcus aeolicus (strain ATCC BAA-1280 / DSM 17508 / OCM 812 / Nankai-3).